The sequence spans 32 residues: Periplasmic [NiFe] hydrogenase small subunit (32 aa).

[4Fe-4S] cluster is bound by residues C17 and C20.

The protein belongs to the [NiFe]/[NiFeSe] hydrogenase small subunit family. Heterodimer of a large and a small subunit. The cofactor is [3Fe-4S] cluster. Requires [4Fe-4S] cluster as cofactor.

It localises to the periplasm. It catalyses the reaction 2 Fe(III)-[cytochrome c3] + H2 = 2 Fe(II)-[cytochrome c3] + 2 H(+). This is Periplasmic [NiFe] hydrogenase small subunit (hydA) from Desulfovibrio multispirans.